The primary structure comprises 1394 residues: DNA-directed RNA polymerase subunit beta' (1394 aa).

Residues C71, C73, C86, and C89 each contribute to the Zn(2+) site. D462, D464, and D466 together coordinate Mg(2+). The Zn(2+) site is built by C811, C885, C892, and C895.

It belongs to the RNA polymerase beta' chain family. As to quaternary structure, the RNAP catalytic core consists of 2 alpha, 1 beta, 1 beta' and 1 omega subunit. When a sigma factor is associated with the core the holoenzyme is formed, which can initiate transcription. The cofactor is Mg(2+). Zn(2+) serves as cofactor.

It carries out the reaction RNA(n) + a ribonucleoside 5'-triphosphate = RNA(n+1) + diphosphate. In terms of biological role, DNA-dependent RNA polymerase catalyzes the transcription of DNA into RNA using the four ribonucleoside triphosphates as substrates. This Xanthobacter autotrophicus (strain ATCC BAA-1158 / Py2) protein is DNA-directed RNA polymerase subunit beta'.